Consider the following 389-residue polypeptide: Galactokinase (389 aa).

33 to 36 is a binding site for substrate; it reads EHTD. ATP is bound by residues serine 67 and 124-130; that span reads GAGLSSS. Positions 130 and 162 each coordinate Mg(2+). Aspartate 174 acts as the Proton acceptor in catalysis. Tyrosine 224 is a binding site for substrate.

This sequence belongs to the GHMP kinase family. GalK subfamily.

The protein resides in the cytoplasm. The enzyme catalyses alpha-D-galactose + ATP = alpha-D-galactose 1-phosphate + ADP + H(+). Its pathway is carbohydrate metabolism; galactose metabolism. In terms of biological role, catalyzes the transfer of the gamma-phosphate of ATP to D-galactose to form alpha-D-galactose-1-phosphate (Gal-1-P). In Fusobacterium nucleatum subsp. nucleatum (strain ATCC 25586 / DSM 15643 / BCRC 10681 / CIP 101130 / JCM 8532 / KCTC 2640 / LMG 13131 / VPI 4355), this protein is Galactokinase.